An 831-amino-acid chain; its full sequence is Intraflagellar transport protein 88 (831 aa).

11 TPR repeats span residues 68–101, 120–153, 156–189, 248–281, 492–525, 526–559, 560–593, 595–627, 632–665, 666–699, and 700–733; these read IFKL…EQKV, TCIW…AEGA, AQIR…ASPS, FDPL…SILI, RGVH…DPYD, SFAH…NMES, VQAT…LPSY, DAIY…FSAV, PSIY…VPFS, LAVI…DTTT, and PKWS…FPTN. The interval 785–816 is disordered; it reads RRNSVAAVGPGSRAGQDRFEASNNRVSSNTGD. Polar residues predominate over residues 805-815; the sequence is ASNNRVSSNTG.

The protein resides in the cell projection. The protein localises to the cilium. It is found in the flagellum. It localises to the cytoplasm. Its subcellular location is the cytoskeleton. The protein resides in the flagellum axoneme. The protein localises to the flagellum basal body. Functionally, component of the intraflagellar transport complex B (IFT-B) involved in flagellar assembly. The sequence is that of Intraflagellar transport protein 88 from Giardia intestinalis (strain ATCC 50803 / WB clone C6) (Giardia lamblia).